The chain runs to 1216 residues: Probable cation-transporting ATPase 13A5 (1216 aa).

The next 5 membrane-spanning stretches (helical) occupy residues 33-53 (RALC…MFYW), 198-218 (LLVK…LTLW), 222-242 (GYIE…VLSV), 401-421 (FMVF…GVYM), and 433-453 (MALI…LTIG). Aspartate 486 acts as the 4-aspartylphosphate intermediate in catalysis. N-linked (GlcNAc...) asparagine glycosylation is found at asparagine 650 and asparagine 817. Aspartate 848 and aspartate 852 together coordinate Mg(2+). 6 helical membrane passes run 896–916 (ALVS…IQFI), 933–950 (YLLQ…TMSI), 971–991 (LLLS…CTFL), 1040–1060 (FEGT…AFIF), 1075–1095 (LFSL…FCDF), and 1113–1133 (VSIL…EDAV).

It belongs to the cation transport ATPase (P-type) (TC 3.A.3) family. Type V subfamily. Specifically expressed in brain and stomach.

It is found in the membrane. The enzyme catalyses ATP + H2O = ADP + phosphate + H(+). This Mus musculus (Mouse) protein is Probable cation-transporting ATPase 13A5 (Atp13a5).